The primary structure comprises 268 residues: Tryptophan synthase alpha chain (268 aa).

Active-site proton acceptor residues include glutamate 49 and aspartate 60.

The protein belongs to the TrpA family. In terms of assembly, tetramer of two alpha and two beta chains.

The enzyme catalyses (1S,2R)-1-C-(indol-3-yl)glycerol 3-phosphate + L-serine = D-glyceraldehyde 3-phosphate + L-tryptophan + H2O. It functions in the pathway amino-acid biosynthesis; L-tryptophan biosynthesis; L-tryptophan from chorismate: step 5/5. The alpha subunit is responsible for the aldol cleavage of indoleglycerol phosphate to indole and glyceraldehyde 3-phosphate. The polypeptide is Tryptophan synthase alpha chain (Escherichia fergusonii (strain ATCC 35469 / DSM 13698 / CCUG 18766 / IAM 14443 / JCM 21226 / LMG 7866 / NBRC 102419 / NCTC 12128 / CDC 0568-73)).